The following is a 117-amino-acid chain: Immunoglobulin lambda variable 10-54 (117 aa).

A signal peptide spans 1 to 21 (MPWALLLLTLLTHSAVSVVQA). The segment at 20–43 (QAGLTQPPSVSKGLRQTATLTCTG) is framework-1. An Ig-like domain is found at 22–117 (GLTQPPSVSK…CSALDSSLSA (96 aa)). C41 and C108 are joined by a disulfide. The segment at 44–52 (NSNIVGNQG) is complementarity-determining-1. The segment at 53 to 69 (AAWLQQHQGHPPKLLSY) is framework-2. Residues 70 to 72 (RNN) form a complementarity-determining-2 region. A framework-3 region spans residues 73-108 (NRPSGISERFSASRSGNTASLTITGLQPEDEADYYC). A complementarity-determining-3 region spans residues 109 to 117 (SALDSSLSA).

In terms of assembly, immunoglobulins are composed of two identical heavy chains and two identical light chains; disulfide-linked.

The protein localises to the secreted. Its subcellular location is the cell membrane. Functionally, v region of the variable domain of immunoglobulin light chains that participates in the antigen recognition. Immunoglobulins, also known as antibodies, are membrane-bound or secreted glycoproteins produced by B lymphocytes. In the recognition phase of humoral immunity, the membrane-bound immunoglobulins serve as receptors which, upon binding of a specific antigen, trigger the clonal expansion and differentiation of B lymphocytes into immunoglobulins-secreting plasma cells. Secreted immunoglobulins mediate the effector phase of humoral immunity, which results in the elimination of bound antigens. The antigen binding site is formed by the variable domain of one heavy chain, together with that of its associated light chain. Thus, each immunoglobulin has two antigen binding sites with remarkable affinity for a particular antigen. The variable domains are assembled by a process called V-(D)-J rearrangement and can then be subjected to somatic hypermutations which, after exposure to antigen and selection, allow affinity maturation for a particular antigen. The chain is Immunoglobulin lambda variable 10-54 from Homo sapiens (Human).